We begin with the raw amino-acid sequence, 362 residues long: 2-aminoethylphosphonate--pyruvate transaminase (362 aa).

At K193 the chain carries N6-(pyridoxal phosphate)lysine.

Belongs to the class-V pyridoxal-phosphate-dependent aminotransferase family. PhnW subfamily. Homodimer. It depends on pyridoxal 5'-phosphate as a cofactor.

It carries out the reaction (2-aminoethyl)phosphonate + pyruvate = phosphonoacetaldehyde + L-alanine. Functionally, involved in phosphonate degradation. This Bacteroides fragilis (strain ATCC 25285 / DSM 2151 / CCUG 4856 / JCM 11019 / LMG 10263 / NCTC 9343 / Onslow / VPI 2553 / EN-2) protein is 2-aminoethylphosphonate--pyruvate transaminase.